The following is a 41-amino-acid chain: Large ribosomal subunit protein bL36 (41 aa).

It belongs to the bacterial ribosomal protein bL36 family.

This is Large ribosomal subunit protein bL36 from Methylobacterium nodulans (strain LMG 21967 / CNCM I-2342 / ORS 2060).